Consider the following 386-residue polypeptide: Succinate--CoA ligase [ADP-forming] subunit beta (386 aa).

The ATP-grasp domain maps to 9-244 (KAVLRSYGVS…LDEEDAKEIE (236 aa)). Residues Lys-46, 53–55 (GRG), Glu-99, Cys-102, and Glu-107 contribute to the ATP site. The Mg(2+) site is built by Asn-199 and Asp-213. Residues Asn-264 and 321–323 (GIM) contribute to the substrate site.

Belongs to the succinate/malate CoA ligase beta subunit family. Heterotetramer of two alpha and two beta subunits. Mg(2+) is required as a cofactor.

It carries out the reaction succinate + ATP + CoA = succinyl-CoA + ADP + phosphate. The enzyme catalyses GTP + succinate + CoA = succinyl-CoA + GDP + phosphate. The protein operates within carbohydrate metabolism; tricarboxylic acid cycle; succinate from succinyl-CoA (ligase route): step 1/1. Succinyl-CoA synthetase functions in the citric acid cycle (TCA), coupling the hydrolysis of succinyl-CoA to the synthesis of either ATP or GTP and thus represents the only step of substrate-level phosphorylation in the TCA. The beta subunit provides nucleotide specificity of the enzyme and binds the substrate succinate, while the binding sites for coenzyme A and phosphate are found in the alpha subunit. This is Succinate--CoA ligase [ADP-forming] subunit beta from Bacillus thuringiensis (strain Al Hakam).